The chain runs to 689 residues: MTERNFLIELGTEELPPKALRTLAEAFSSNFEAELKTAALVHQGIEWFATPRRLALKVTALATGQADSVVEKRGPAISAAFDAEGNPTKAAQGWARGNGITVEQADTLKTEKGEWLLYKQEVKGKPAQELLSGLAAAALAKLPIPKPMRWGNNEIQFIRPVKTLTMLLGDELIEGNILGADSARIIRGHRFMGEAEFTIDNADQYPAILEERGKVMANYEARKAIILEGAKKAALEVGGIADLEDELVEEVTSLVEWPVVLTASFEENFLNVPTEALVYTMKGDQKYFPVYDAEGNLIPKFIFVTNIESKDPRQIIEGNEKVVRPRLADAEFFFKTDRKRPLVDRLPELEKAIFQKQLGTIKDKTDRITELAGYIAEQIGADVTNAKRAGLLAKCDLMTSMVFEFTDTQGVMGMHYARHDGEAEDVALALYEQYMPRFAGDKLPSTGVSAAVAMADKIDTLVGIFGIGQAPKGSDPFALRRAALGVLRIIVEKDYSLDLVDLIAKARAQFGDKLTNANVEDEVIDFMLGRFRAWYQDEGHSVDVILAVLALRPTQPADFDKRVKAVSHFRSLDAAESLAAANKRVGNILAKFDGELPLAVDSSLLLEDAEKALAEKVEAMIATLAPVFAEGNYQQALSELATLREPVDAFFDNVMVMADDEKLKVNRLTMLNLLRNEFLKVADISLVQK.

This sequence belongs to the class-II aminoacyl-tRNA synthetase family. As to quaternary structure, tetramer of two alpha and two beta subunits.

Its subcellular location is the cytoplasm. The catalysed reaction is tRNA(Gly) + glycine + ATP = glycyl-tRNA(Gly) + AMP + diphosphate. The protein is Glycine--tRNA ligase beta subunit of Photobacterium profundum (strain SS9).